A 433-amino-acid polypeptide reads, in one-letter code: tRNA-2-methylthio-N(6)-dimethylallyladenosine synthase (433 aa).

The MTTase N-terminal domain maps to 3–118 (KKLFIQTLGC…ISTAVKTPKF (116 aa)). [4Fe-4S] cluster is bound by residues cysteine 12, cysteine 49, cysteine 81, cysteine 150, cysteine 154, and cysteine 157. Positions 136–369 (RGSPYKSHIN…QSRHNEILDE (234 aa)) constitute a Radical SAM core domain. In terms of domain architecture, TRAM spans 372-433 (AAQEGKILDV…RMVLYGELAN (62 aa)).

The protein belongs to the methylthiotransferase family. MiaB subfamily. In terms of assembly, monomer. Requires [4Fe-4S] cluster as cofactor.

Its subcellular location is the cytoplasm. The catalysed reaction is N(6)-dimethylallyladenosine(37) in tRNA + (sulfur carrier)-SH + AH2 + 2 S-adenosyl-L-methionine = 2-methylsulfanyl-N(6)-dimethylallyladenosine(37) in tRNA + (sulfur carrier)-H + 5'-deoxyadenosine + L-methionine + A + S-adenosyl-L-homocysteine + 2 H(+). Its function is as follows. Catalyzes the methylthiolation of N6-(dimethylallyl)adenosine (i(6)A), leading to the formation of 2-methylthio-N6-(dimethylallyl)adenosine (ms(2)i(6)A) at position 37 in tRNAs that read codons beginning with uridine. This is tRNA-2-methylthio-N(6)-dimethylallyladenosine synthase from Campylobacter curvus (strain 525.92).